A 937-amino-acid chain; its full sequence is Bifunctional glutamine synthetase adenylyltransferase/adenylyl-removing enzyme (937 aa).

The interval 1-436 (MSQPIPSASP…AAEFAELLAP (436 aa)) is adenylyl removase. The tract at residues 443–937 (PDTLADYWRA…QLRFQPGKGA (495 aa)) is adenylyl transferase.

This sequence belongs to the GlnE family. The cofactor is Mg(2+).

The catalysed reaction is [glutamine synthetase]-O(4)-(5'-adenylyl)-L-tyrosine + phosphate = [glutamine synthetase]-L-tyrosine + ADP. It catalyses the reaction [glutamine synthetase]-L-tyrosine + ATP = [glutamine synthetase]-O(4)-(5'-adenylyl)-L-tyrosine + diphosphate. Functionally, involved in the regulation of glutamine synthetase GlnA, a key enzyme in the process to assimilate ammonia. When cellular nitrogen levels are high, the C-terminal adenylyl transferase (AT) inactivates GlnA by covalent transfer of an adenylyl group from ATP to specific tyrosine residue of GlnA, thus reducing its activity. Conversely, when nitrogen levels are low, the N-terminal adenylyl removase (AR) activates GlnA by removing the adenylyl group by phosphorolysis, increasing its activity. The regulatory region of GlnE binds the signal transduction protein PII (GlnB) which indicates the nitrogen status of the cell. In Xanthomonas campestris pv. campestris (strain B100), this protein is Bifunctional glutamine synthetase adenylyltransferase/adenylyl-removing enzyme.